The sequence spans 454 residues: UPF0210 protein BL1209 (454 aa).

It belongs to the UPF0210 family. As to quaternary structure, homodimer.

In Bifidobacterium longum (strain NCC 2705), this protein is UPF0210 protein BL1209.